The primary structure comprises 253 residues: Vitamin B12 import ATP-binding protein BtuD (253 aa).

In terms of domain architecture, ABC transporter spans 1–236 (MTNQLMALNQ…NTLSRVFAAD (236 aa)). 34–41 (GPNGSGKS) is a binding site for ATP.

This sequence belongs to the ABC transporter superfamily. Vitamin B12 importer (TC 3.A.1.13.1) family. In terms of assembly, the complex is composed of two ATP-binding proteins (BtuD), two transmembrane proteins (BtuC) and a solute-binding protein (BtuF).

The protein resides in the cell inner membrane. It carries out the reaction an R-cob(III)alamin(out) + ATP + H2O = an R-cob(III)alamin(in) + ADP + phosphate + H(+). Part of the ABC transporter complex BtuCDF involved in vitamin B12 import. Responsible for energy coupling to the transport system. The chain is Vitamin B12 import ATP-binding protein BtuD from Photorhabdus laumondii subsp. laumondii (strain DSM 15139 / CIP 105565 / TT01) (Photorhabdus luminescens subsp. laumondii).